The primary structure comprises 133 residues: Large ribosomal subunit protein uL15 (133 aa).

Positions 1–57 (MALEKLTPAAGSTHATKRIGRGQGSGNGKTAGKGNKGQRARKGYNEKRGFEGGQQPL) are disordered. Residues 21–35 (RGQGSGNGKTAGKGN) are compositionally biased toward gly residues.

Belongs to the universal ribosomal protein uL15 family. Part of the 50S ribosomal subunit.

Functionally, binds to the 23S rRNA. The chain is Large ribosomal subunit protein uL15 from Campylobacter concisus (strain 13826).